We begin with the raw amino-acid sequence, 158 residues long: Protein Smg homolog (158 aa).

Belongs to the Smg family.

The polypeptide is Protein Smg homolog (Coxiella burnetii (strain Dugway 5J108-111)).